Here is a 291-residue protein sequence, read N- to C-terminus: Oxidative stress-responsive serine-rich protein 1 (291 aa).

The interval 29–139 is disordered; that stretch reads ISLSVGEGPS…NAGENSTSLD (111 aa). The segment covering 65–83 has biased composition (basic residues); that stretch reads STRKSSRGAVRTQRRRRSK. Positions 95–105 are enriched in polar residues; sequence CSTTAPPSSSQ. Position 143 is a phosphothreonine (threonine 143).

The polypeptide is Oxidative stress-responsive serine-rich protein 1 (Oser1) (Mus musculus (Mouse)).